The chain runs to 284 residues: NH(3)-dependent NAD(+) synthetase (284 aa).

Position 51–58 (51–58 (GISGGIDS)) interacts with ATP. Asp-57 lines the Mg(2+) pocket. A deamido-NAD(+)-binding site is contributed by Arg-148. Residue Thr-168 coordinates ATP. Glu-173 provides a ligand contact to Mg(2+). The deamido-NAD(+) site is built by Lys-181 and Asp-188. Residues Lys-197 and Thr-219 each contribute to the ATP site. 268–269 (HK) contributes to the deamido-NAD(+) binding site.

The protein belongs to the NAD synthetase family. In terms of assembly, homodimer.

It carries out the reaction deamido-NAD(+) + NH4(+) + ATP = AMP + diphosphate + NAD(+) + H(+). It participates in cofactor biosynthesis; NAD(+) biosynthesis; NAD(+) from deamido-NAD(+) (ammonia route): step 1/1. Its function is as follows. Catalyzes the ATP-dependent amidation of deamido-NAD to form NAD. Uses ammonia as a nitrogen source. In Burkholderia pseudomallei (strain 1106a), this protein is NH(3)-dependent NAD(+) synthetase.